Consider the following 517-residue polypeptide: Probable protein phosphatase 2C 20 (517 aa).

The segment at 1-59 (MWVMQGERRRARAPWGPPDTGGALLERWISRERRSDSRDASGSAKQRSAMGNSLPVESK) is disordered. A compositionally biased stretch (basic and acidic residues) spans 28–39 (WISRERRSDSRD). Residues 70-373 (KYVVSSMQGW…DNTTVILVLF (304 aa)) enclose the PPM-type phosphatase domain. Mn(2+) contacts are provided by D105, G106, E323, and D364. Positions 380 to 517 (AVPPVDTDTD…PPHDDTYHRW (138 aa)) are disordered. The segment covering 402 to 414 (GSNNATASDNNDP) has biased composition (polar residues). Over residues 438-455 (DATATAVGSSSTTAVAAD) the composition is skewed to low complexity. Residues 499–517 (LPRSNPDKSPPHDDTYHRW) are compositionally biased toward basic and acidic residues.

This sequence belongs to the PP2C family. Mg(2+) serves as cofactor. Requires Mn(2+) as cofactor.

It carries out the reaction O-phospho-L-seryl-[protein] + H2O = L-seryl-[protein] + phosphate. It catalyses the reaction O-phospho-L-threonyl-[protein] + H2O = L-threonyl-[protein] + phosphate. The polypeptide is Probable protein phosphatase 2C 20 (Oryza sativa subsp. japonica (Rice)).